Here is a 439-residue protein sequence, read N- to C-terminus: Potassium/proton antiporter CemA (439 aa).

6 helical membrane-spanning segments follow: residues 55-75, 79-99, 220-240, 317-337, 364-384, and 399-419; these read IMLY…WSLL, ISLF…NFFN, YMLF…IWFL, LLHL…FILG, ILLL…EIVI, and IISC…KYWI.

This sequence belongs to the CemA family.

The protein resides in the plastid. It is found in the chloroplast inner membrane. The enzyme catalyses K(+)(in) + H(+)(out) = K(+)(out) + H(+)(in). Its function is as follows. Contributes to K(+)/H(+) antiport activity by supporting proton efflux to control proton extrusion and homeostasis in chloroplasts in a light-dependent manner to modulate photosynthesis. Prevents excessive induction of non-photochemical quenching (NPQ) under continuous-light conditions. Indirectly promotes efficient inorganic carbon uptake into chloroplasts. The sequence is that of Potassium/proton antiporter CemA from Physcomitrium patens (Spreading-leaved earth moss).